The sequence spans 387 residues: MNLHEYQAKQLFASYGLPVPRGEVAYNVEDALLVASQLSTSRWVVKAQVHAGGRGKAGGVKLVSSKDELAAVAKSMLGTRLVTYQTDARGQPVNAILVEETCEIDKELYLGAVVDRSTRRVVIMASTEGGVEIEKVAHETPEKIFKVVVDPLVGVMPFQCRETAFKLGLKDDQIKQFTHLMMGLGKMFVDCDLSLLEINPLVITKSGQLICLDGKINIDGNALFRQPKLKNMRDVSQEDDRENRASDWELNYIPLDGTIGCMVNGAGLAMATMDVIKLHGGEPANFLDVGGGATKERVSEALKIIVSDEKVKGILVNIFGGIVRCDLIADGILAAVKEVDVKIPVVVRLEGNNAQLGAEILNKSNLNVIAATSLTDAAKKIVAAVSE.

Residues 9–244 enclose the ATP-grasp domain; the sequence is KQLFASYGLP…VSQEDDRENR (236 aa). ATP is bound by residues lysine 46, 53 to 55, glutamate 99, cysteine 102, and glutamate 107; that span reads GRG. Asparagine 199 and aspartate 213 together coordinate Mg(2+). Substrate is bound by residues asparagine 264 and 321-323; that span reads GIV.

The protein belongs to the succinate/malate CoA ligase beta subunit family. Heterotetramer of two alpha and two beta subunits. It depends on Mg(2+) as a cofactor.

The enzyme catalyses succinate + ATP + CoA = succinyl-CoA + ADP + phosphate. The catalysed reaction is GTP + succinate + CoA = succinyl-CoA + GDP + phosphate. It participates in carbohydrate metabolism; tricarboxylic acid cycle; succinate from succinyl-CoA (ligase route): step 1/1. Functionally, succinyl-CoA synthetase functions in the citric acid cycle (TCA), coupling the hydrolysis of succinyl-CoA to the synthesis of either ATP or GTP and thus represents the only step of substrate-level phosphorylation in the TCA. The beta subunit provides nucleotide specificity of the enzyme and binds the substrate succinate, while the binding sites for coenzyme A and phosphate are found in the alpha subunit. This chain is Succinate--CoA ligase [ADP-forming] subunit beta, found in Legionella pneumophila (strain Corby).